Reading from the N-terminus, the 161-residue chain is 2-C-methyl-D-erythritol 2,4-cyclodiphosphate synthase (161 aa).

A divalent metal cation is bound by residues Asp10 and His12. Residues 10–12 (DVH) and 36–37 (HS) each bind 4-CDP-2-C-methyl-D-erythritol 2-phosphate. His44 serves as a coordination point for a divalent metal cation. Residues 58-60 (DIG), 63-67 (FSDTD), and Arg144 each bind 4-CDP-2-C-methyl-D-erythritol 2-phosphate.

Belongs to the IspF family. Homotrimer. It depends on a divalent metal cation as a cofactor.

It catalyses the reaction 4-CDP-2-C-methyl-D-erythritol 2-phosphate = 2-C-methyl-D-erythritol 2,4-cyclic diphosphate + CMP. Its pathway is isoprenoid biosynthesis; isopentenyl diphosphate biosynthesis via DXP pathway; isopentenyl diphosphate from 1-deoxy-D-xylulose 5-phosphate: step 4/6. In terms of biological role, involved in the biosynthesis of isopentenyl diphosphate (IPP) and dimethylallyl diphosphate (DMAPP), two major building blocks of isoprenoid compounds. Catalyzes the conversion of 4-diphosphocytidyl-2-C-methyl-D-erythritol 2-phosphate (CDP-ME2P) to 2-C-methyl-D-erythritol 2,4-cyclodiphosphate (ME-CPP) with a corresponding release of cytidine 5-monophosphate (CMP). The sequence is that of 2-C-methyl-D-erythritol 2,4-cyclodiphosphate synthase from Burkholderia ambifaria (strain MC40-6).